The chain runs to 151 residues: Peptide methionine sulfoxide reductase MsrB (151 aa).

The MsrB domain maps to 9–132 (DGELKRTLTK…NSAALKFIPF (124 aa)). The active-site Nucleophile is the Cys121.

It belongs to the MsrB Met sulfoxide reductase family.

It catalyses the reaction L-methionyl-[protein] + [thioredoxin]-disulfide + H2O = L-methionyl-(R)-S-oxide-[protein] + [thioredoxin]-dithiol. This Mycoplasma pneumoniae (strain ATCC 29342 / M129 / Subtype 1) (Mycoplasmoides pneumoniae) protein is Peptide methionine sulfoxide reductase MsrB.